A 185-amino-acid chain; its full sequence is Ribosome-recycling factor (185 aa).

The interval 143 to 163 (RKDGEAGEDEVARAEKDLDKS) is disordered.

This sequence belongs to the RRF family.

The protein localises to the cytoplasm. Responsible for the release of ribosomes from messenger RNA at the termination of protein biosynthesis. May increase the efficiency of translation by recycling ribosomes from one round of translation to another. This is Ribosome-recycling factor from Mycobacterium ulcerans (strain Agy99).